Consider the following 597-residue polypeptide: MTAQIRLAEPADLNDDTLRARAVAAARGDQRFDVLITGGTLVDVVTGELRPADIGIVGALIASVHEPASRRDAAQVIDAGGAYVSPGLIDTHMHIESSMITPAAYAAAVVARGVTTIVWDPHEFGNVHGVDGVRWAAKAIENLPLRAILLAPSCVPSAPGLERGGADFDAAILADLLSWPEIGGIAEIMNMRGVIERDPRMSGIVQAGLAAEKLVCGHARGLKNADLNAFMAAGVSSDHELVSGEDLMAKLRAGLTIELRGSHDHLLPEFVAALNTLGHLPQTVTLCTDDVFPDDLLQGGGLDDVVRRLVRYGLKPEWALRAATLNAAQRLGRSDLGLIAAGRRADIVVFEDLNGFSARHVLASGRAVAEGGRMLVDIPTCDTTVLKGSMKLPLRMANDFLVKSQGAKVRLATIDRPRFTQWGETEADVKDGFVVPPEGATMISVTHRHGMAEPTTKTGFLTGWGRWNGAFATTVSHDSHNLTVFGGNAGDMALAANAVIGTGGGMAVASEGKVTAILPLPLSGLVSDAPLEEVARAFEDLREAVGKVVEWQPPYLVFKACFGATLACNIGPHQTDMGIADVLTGKVMESPVIEVLG.

Belongs to the metallo-dependent hydrolases superfamily. Adenine deaminase family. Mn(2+) serves as cofactor.

The enzyme catalyses adenine + H2O + H(+) = hypoxanthine + NH4(+). This is Adenine deaminase 2 from Agrobacterium fabrum (strain C58 / ATCC 33970) (Agrobacterium tumefaciens (strain C58)).